A 257-amino-acid polypeptide reads, in one-letter code: 3-deoxy-manno-octulosonate cytidylyltransferase (257 aa).

Belongs to the KdsB family.

It localises to the cytoplasm. It carries out the reaction 3-deoxy-alpha-D-manno-oct-2-ulosonate + CTP = CMP-3-deoxy-beta-D-manno-octulosonate + diphosphate. It participates in nucleotide-sugar biosynthesis; CMP-3-deoxy-D-manno-octulosonate biosynthesis; CMP-3-deoxy-D-manno-octulosonate from 3-deoxy-D-manno-octulosonate and CTP: step 1/1. Its pathway is bacterial outer membrane biogenesis; lipopolysaccharide biosynthesis. Its function is as follows. Activates KDO (a required 8-carbon sugar) for incorporation into bacterial lipopolysaccharide in Gram-negative bacteria. In Methylococcus capsulatus (strain ATCC 33009 / NCIMB 11132 / Bath), this protein is 3-deoxy-manno-octulosonate cytidylyltransferase.